A 248-amino-acid chain; its full sequence is 2,3-bisphosphoglycerate-dependent phosphoglycerate mutase (248 aa).

Residues 8 to 15, 21 to 22, Arg-60, 87 to 90, Lys-98, 114 to 115, and 183 to 184 each bind substrate; these read RHGESEWN, TG, ERHY, RR, and GN. The Tele-phosphohistidine intermediate role is filled by His-9. The active-site Proton donor/acceptor is Glu-87.

It belongs to the phosphoglycerate mutase family. BPG-dependent PGAM subfamily.

It catalyses the reaction (2R)-2-phosphoglycerate = (2R)-3-phosphoglycerate. It participates in carbohydrate degradation; glycolysis; pyruvate from D-glyceraldehyde 3-phosphate: step 3/5. In terms of biological role, catalyzes the interconversion of 2-phosphoglycerate and 3-phosphoglycerate. This Borreliella afzelii (strain PKo) (Borrelia afzelii) protein is 2,3-bisphosphoglycerate-dependent phosphoglycerate mutase.